A 224-amino-acid polypeptide reads, in one-letter code: MINPVTNTQGVSPINTKYAEHVVKNIYPKIKHDYFNESPNIYDKKYISGITRGVAELKQEEFVNEKARRFSYMKTMYSVCPEAFEPISRNEASTPEGSWLTVISGKRPMGQFSVDSLYNPDLHALCELPDICCKIFPKENNDFLYIVVVYRNDSPLGEQRANRFIELYNIKRDIMQELNYELPELKAVKSEMIIAREMGEIFSYMPGEIDSYMKYINNKLSKIE.

Residues 49-52 (GITR) are interaction with host proteins TAB2, TAB3 and ZRANB3. Positions 92, 98, 107, 111, 204, and 208 each coordinate S-adenosyl-L-methionine.

It belongs to the NleE/OspZ family. As to quaternary structure, monomer.

The protein localises to the secreted. It localises to the host nucleus. The catalysed reaction is L-cysteinyl-[protein] + S-adenosyl-L-methionine = S-methyl-L-cysteinyl-[protein] + S-adenosyl-L-homocysteine + H(+). In terms of biological role, cysteine methyltransferase effector that inhibits host cell NF-kappa-B activation by preventing nuclear translocation of host protein RELA/p65. Acts by mediating cysteine methylation of host proteins TAB2 and TAB3: methylation of a conserved cysteine residue of the RanBP2-type zinc finger (NZF) of TAB2 and TAB3 disrupts zinc-binding, thereby inactivating the ubiquitin chain-binding activity of TAB2 and TAB3, leading to NF-kappa-B inactivation. Also mediates cysteine methylation of host protein ZRANB3, inactivating its ability to bind ubiquitin chains. The protein is Cysteine S-methyltransferase NleE of Escherichia coli O127:H6 (strain E2348/69 / EPEC).